Consider the following 348-residue polypeptide: Sec-independent protein translocase protein TatC (348 aa).

Transmembrane regions (helical) follow at residues 7-27 (LCLT…MDIL), 162-182 (VVIS…PGLL), 192-212 (CMAV…FIVL), 244-264 (MILM…FVKL), 278-298 (YAIV…DVAT), and 299-319 (MMLM…LAWM).

Belongs to the TatC family. In terms of assembly, forms a complex with TatA.

It localises to the cell membrane. Functionally, part of the twin-arginine translocation (Tat) system that transports large folded proteins containing a characteristic twin-arginine motif in their signal peptide across membranes. In Akkermansia muciniphila (strain ATCC BAA-835 / DSM 22959 / JCM 33894 / BCRC 81048 / CCUG 64013 / CIP 107961 / Muc), this protein is Sec-independent protein translocase protein TatC.